The following is a 243-amino-acid chain: Vimentin A2 (243 aa).

A coil 1B region spans residues 1–22 (GFSLQDELDFLKKLHDEELADV). One can recognise an IF rod domain in the interval 1-188 (GFSLQDELDF…KLLEGEESRI (188 aa)). The linker 12 stretch occupies residues 23 to 45 (QAQIQDQQVQVDMDMAKPDLTAA). Positions 46–184 (LRDVRLQYEN…ATYRKLLEGE (139 aa)) are coil 2. Residues 185 to 243 (ESRITTPLPNLSSFNLRDAILETKPILENTFSKKVLIKTIETRDGEVINESTQNHDDLE) form a tail region.

Belongs to the intermediate filament family. In terms of assembly, homomer. One of the most prominent phosphoproteins in various cells of mesenchymal origin. Phosphorylation is enhanced during cell division, at which time vimentin filaments are significantly reorganized. Expressed in low amounts in retina, optic nerve, and brain and in higher amounts in spinal cord.

In terms of biological role, vimentins are class-III intermediate filaments found in various non-epithelial cells, especially mesenchymal cells. Vimentin is attached to the nucleus, endoplasmic reticulum, and mitochondria, either laterally or terminally. The protein is Vimentin A2 of Carassius auratus (Goldfish).